The chain runs to 901 residues: MEAARPSGSWNGALCRLLLLTLAILIFASDACKNVTLHVPSKLDAEKLVGRVNLKECFTAANLIHSSDPDFQILEDGSVYTTNTILLSSEKRSFTILLSNTENQEKKKIFVFLEHQTKVLKKRHTKEKVLRRAKRRWAPIPCSMLENSLGPFPLFLQQVQSDTAQNYTIYYSIRGPGVDQEPRNLFYVERDTGNLYCTRPVDREQYESFEIIAFATTPDGYTPELPLPLIIKIEDENDNYPIFTEETYTFTIFENCRVGTTVGQVCATDKDEPDTMHTRLKYSIIGQVPPSPTLFSMHPTTGVITTTSSQLDRELIDKYQLKIKVQDMDGQYFGLQTTSTCIINIDDVNDHLPTFTRTSYVTSVEENTVDVEILRVTVEDKDLVNTANWRANYTILKGNENGNFKIVTDAKTNEGVLCVVKPLNYEEKQQMILQIGVVNEAPFSREASPRSAMSTATVTVNVEDQDEGPECNPPIQTVRMKENAEVGTTSNGYKAYDPETRSSSGIRYKKLTDPTGWVTIDENTGSIKVFRSLDREAETIKNGIYNITVLASDQGGRTCTGTLGIILQDVNDNSPFIPKKTVIICKPTMSSAEIVAVDPDEPIHGPPFDFSLESSTSEVQRMWRLKAINDTAARLSYQNDPPFGSYVVPITVRDRLGMSSVTSLDVTLCDCITENDCTHRVDPRIGGGGVQLGKWAILAILLGIALLFCILFTLVCGASGTSKQPKVIPDDLAQQNLIVSNTEAPGDDKVYSANGFTTQTVGASAQGVCGTVGSGIKNGGQETIEMVKGGHQTSESCRGAGHHHTLDSCRGGHTEVDNCRYTYSEWHSFTQPRLGEKVYLCNQDENHKHAQDYVLTYNYEGRGSVAGSVGCCSERQEEDGLEFLDNLEPKFRTLAEACMKR.

A signal peptide spans 1–27 (MEAARPSGSWNGALCRLLLLTLAILIF). Positions 28–135 (ASDACKNVTL…KEKVLRRAKR (108 aa)) are excised as a propeptide. N-linked (GlcNAc...) asparagine glycosylation is found at asparagine 34 and asparagine 166. 5 consecutive Cadherin domains span residues 136–243 (RWAP…YPIF), 244–355 (TEET…LPTF), 356–471 (TRTS…GPEC), 472–579 (NPPI…FIPK), and 580–694 (KTVI…QLGK). Topologically, residues 136 to 694 (RWAPIPCSML…IGGGGVQLGK (559 aa)) are extracellular. Residue asparagine 392 is glycosylated (N-linked (GlcNAc...) (complex) asparagine). 2 N-linked (GlcNAc...) asparagine glycosylation sites follow: asparagine 546 and asparagine 629. A helical transmembrane segment spans residues 695–715 (WAILAILLGIALLFCILFTLV). Residues 716–901 (CGASGTSKQP…RTLAEACMKR (186 aa)) are Cytoplasmic-facing. Phosphoserine is present on residues serine 864, serine 868, and serine 873.

Interacts with DSP, PKP2 and JUP. Interacts with DSG3; the interaction may limit the interaction of DSC3 with p38MAPK family members and therefore repress p38MAPK signaling activation. As to expression, expressed at intercalated disks in the heart, where it is colocalized with CDH2 (at protein level). Expressed in intestinal mucosal cells (at protein level).

The protein resides in the cell membrane. The protein localises to the cell junction. Its subcellular location is the desmosome. In terms of biological role, a component of desmosome cell-cell junctions which are required for positive regulation of cellular adhesion. Promotes timely incorporation of DSG2 into desmosome intercellular junctions and promotes interaction of desmosome cell junctions with intermediate filament cytokeratin, via modulation of DSP phosphorylation. Plays an important role in desmosome-mediated maintenance of intestinal epithelial cell intercellular adhesion strength and barrier function. Positively regulates wound healing of intestinal mucosa via promotion of epithelial cell migration, and also plays a role in mechanotransduction of force between intestinal epithelial cells and extracellular matrix. May contribute to epidermal cell positioning (stratification) by mediating differential adhesiveness between cells that express different isoforms. May promote p38MAPK signaling activation that facilitates keratinocyte migration. In Homo sapiens (Human), this protein is Desmocollin-2.